A 559-amino-acid polypeptide reads, in one-letter code: SH3 domain-binding protein 2 (559 aa).

The PH domain maps to 26-130 (GVAKAGYLHK…WMAFVRREIG (105 aa)). Residues 164-449 (LSSYPMDNED…EDSDEDYEKV (286 aa)) form a disordered region. The segment covering 170-184 (DNEDYEHEDEDDSYL) has biased composition (acidic residues). Phosphotyrosine; by SYK is present on residues Tyr174 and Tyr183. Residues 201 to 210 (PPAYPPPPVP) carry the SH3-binding motif. Pro residues-rich tracts occupy residues 202–213 (PAYPPPPVPVPR) and 233–242 (PLLPPPPPKR). Residues 252–265 (EDAKDALGLRRVEP) are compositionally biased toward basic and acidic residues. Residue Ser277 is modified to Phosphoserine. The span at 313–327 (TSSVSSSTTMAVATS) shows a compositional bias: low complexity. Positions 360–371 (KIAEEPSPREAA) are enriched in basic and acidic residues. A compositionally biased stretch (pro residues) spans 375-386 (PVPPVAPRPPVQ). Residues Ser414 and Ser425 each carry the phosphoserine modification. Over residues 437–446 (TGEEDSDEDY) the composition is skewed to acidic residues. Tyr446 carries the phosphotyrosine; by SYK modification. One can recognise an SH2 domain in the interval 455–553 (VFVNTTESCE…HQSLLLRHPY (99 aa)).

Phosphorylated. Phosphorylation at Tyr-446 may stimulate the activity of the LYN kinase.

Binds differentially to the SH3 domains of certain proteins of signal transduction pathways. Binds to phosphatidylinositols; linking the hemopoietic tyrosine kinase fes to the cytoplasmic membrane in a phosphorylation dependent mechanism. This is SH3 domain-binding protein 2 (Sh3bp2) from Mus musculus (Mouse).